A 108-amino-acid polypeptide reads, in one-letter code: Nucleoid-associated protein HEAR1046 (108 aa).

Positions 86-108 are disordered; it reads TSQEKMAGATAGMPMPPGFKMPF. The span at 99–108 shows a compositional bias: pro residues; the sequence is PMPPGFKMPF.

The protein belongs to the YbaB/EbfC family. Homodimer.

The protein localises to the cytoplasm. The protein resides in the nucleoid. In terms of biological role, binds to DNA and alters its conformation. May be involved in regulation of gene expression, nucleoid organization and DNA protection. The sequence is that of Nucleoid-associated protein HEAR1046 from Herminiimonas arsenicoxydans.